The chain runs to 178 residues: Orotate phosphoribosyltransferase (178 aa).

5-phospho-alpha-D-ribose 1-diphosphate contacts are provided by residues arginine 92, lysine 93, lysine 96, and 118 to 126; that span reads EDVTTTGGS. Orotate-binding residues include threonine 122 and arginine 150.

Belongs to the purine/pyrimidine phosphoribosyltransferase family. PyrE subfamily. Homodimer. Requires Mg(2+) as cofactor.

It carries out the reaction orotidine 5'-phosphate + diphosphate = orotate + 5-phospho-alpha-D-ribose 1-diphosphate. It participates in pyrimidine metabolism; UMP biosynthesis via de novo pathway; UMP from orotate: step 1/2. Its function is as follows. Catalyzes the transfer of a ribosyl phosphate group from 5-phosphoribose 1-diphosphate to orotate, leading to the formation of orotidine monophosphate (OMP). This chain is Orotate phosphoribosyltransferase, found in Methanosphaera stadtmanae (strain ATCC 43021 / DSM 3091 / JCM 11832 / MCB-3).